We begin with the raw amino-acid sequence, 334 residues long: Replication factor C subunit 4 (334 aa).

55–62 (GPPGTGKT) contacts ATP.

It belongs to the activator 1 small subunits family. As to quaternary structure, heteropentamer of various rfc subunits that forms a complex (RFC) with PCNA in the presence of ATP.

It localises to the nucleus. Functionally, the elongation of primed DNA templates by DNA polymerase delta and epsilon requires the action of the accessory proteins PCNA and activator 1. This subunit may be involved in the elongation of the multiprimed DNA template. The polypeptide is Replication factor C subunit 4 (rfc-4) (Caenorhabditis elegans).